A 254-amino-acid polypeptide reads, in one-letter code: Probable transcriptional regulatory protein Saro_0419 (254 aa).

Basic residues predominate over residues 1 to 14 (MAGHSKFKNIMHRK). A disordered region spans residues 1 to 22 (MAGHSKFKNIMHRKGAQDKKRS).

It belongs to the TACO1 family.

The protein resides in the cytoplasm. The chain is Probable transcriptional regulatory protein Saro_0419 from Novosphingobium aromaticivorans (strain ATCC 700278 / DSM 12444 / CCUG 56034 / CIP 105152 / NBRC 16084 / F199).